The sequence spans 220 residues: Peptide methionine sulfoxide reductase MsrA (220 aa).

Residue cysteine 54 is part of the active site.

It belongs to the MsrA Met sulfoxide reductase family.

The catalysed reaction is L-methionyl-[protein] + [thioredoxin]-disulfide + H2O = L-methionyl-(S)-S-oxide-[protein] + [thioredoxin]-dithiol. It carries out the reaction [thioredoxin]-disulfide + L-methionine + H2O = L-methionine (S)-S-oxide + [thioredoxin]-dithiol. Functionally, has an important function as a repair enzyme for proteins that have been inactivated by oxidation. Catalyzes the reversible oxidation-reduction of methionine sulfoxide in proteins to methionine. This is Peptide methionine sulfoxide reductase MsrA from Salinispora tropica (strain ATCC BAA-916 / DSM 44818 / JCM 13857 / NBRC 105044 / CNB-440).